Here is a 526-residue protein sequence, read N- to C-terminus: Thymocyte selection-associated high mobility group box protein TOX (526 aa).

Polar residues predominate over residues 194-203 (NMGGTNVAHN). The disordered stretch occupies residues 194–264 (NMGGTNVAHN…KKDPNEPQKP (71 aa)). Over residues 209–220 (GSKSATPSPSSS) the composition is skewed to low complexity. Positions 228–245 (DASKINGGEKRPASDMGK) are enriched in basic and acidic residues. Positions 237–256 (KRPASDMGKKPKTPKKKKKK) match the Nuclear localization signal motif. Basic residues predominate over residues 246 to 256 (KPKTPKKKKKK). Residues 261–329 (PQKPVSAYAL…EYLKQLAAYR (69 aa)) constitute a DNA-binding region (HMG box).

Belongs to the high motility group (HMG) box superfamily. Interacts with HBO1 complex composed at least of KAT7/HBO1, ING4, MEAF6, and JADE2; this complex is involved in histone acetylation. Interacts with DNMT1, LEO1, PAF1, SAP130 and SIN3A; these interactors regulate chromatin remodeling. Interacts with an array of proteins involved in RNA processing and translation and DNA replication. Expressed in neurons of the subventricular zone (at protein level). Expressed in distinct subpopulations of thymocytes undergoing positive selection: double CD4-positive CD8-positive (DP) cells, CD4-positive CD8-low transitional cells and in single CD4-positive and CD8-positive cells (at protein level). Expressed in ILC progenitors and mature ILC subsets: ILC1, ILC2 and ILC3 (at protein level). Expressed in lymphoid tissue-inducer cells and bone marrow NK cell subsets. Abundant in thymus, liver and brain. Also detected in small intestine, spleen, stomach and testis. Highly expressed in tumor-infiltrating CD8-positive T cells (at protein level).

The protein localises to the nucleus. Functionally, transcriptional regulator with a major role in neural stem cell commitment and corticogenesis as well as in lymphoid cell development and lymphoid tissue organogenesis. Binds to GC-rich DNA sequences in the proximity of transcription start sites and may alter chromatin structure, modifying access of transcription factors to DNA. During cortical development, controls the neural stem cell pool by inhibiting the switch from proliferative to differentiating progenitors. Beyond progenitor cells, promotes neurite outgrowth in newborn neurons migrating to reach the cortical plate. May activate or repress critical genes for neural stem cell fate such as SOX2, EOMES and ROBO2. Plays an essential role in the development of lymphoid tissue-inducer (LTi) cells, a subset necessary for the formation of secondary lymphoid organs: peripheral lymph nodes and Peyer's patches. Acts as a developmental checkpoint and regulates thymocyte positive selection toward T cell lineage commitment. Required for the development of various T cell subsets, including CD4-positive helper T cells, CD8-positive cytotoxic T cells, regulatory T cells and CD1D-dependent natural killer T (NKT) cells. Required for the differentiation of common lymphoid progenitors (CMP) to innate lymphoid cells (ILC). May regulate the NOTCH-mediated gene program, promoting differentiation of the ILC lineage. Required at the progenitor phase of NK cell development in the bone marrow to specify NK cell lineage commitment. Upon chronic antigen stimulation, diverts T cell development by promoting the generation of exhaustive T cells, while suppressing effector and memory T cell programming. May regulate the expression of genes encoding inhibitory receptors such as PDCD1 and induce the exhaustion program, to prevent the overstimulation of T cells and activation-induced cell death. The protein is Thymocyte selection-associated high mobility group box protein TOX of Mus musculus (Mouse).